The sequence spans 467 residues: ATP synthase subunit beta (467 aa).

156–163 (GGAGVGKT) provides a ligand contact to ATP.

It belongs to the ATPase alpha/beta chains family. In terms of assembly, F-type ATPases have 2 components, CF(1) - the catalytic core - and CF(0) - the membrane proton channel. CF(1) has five subunits: alpha(3), beta(3), gamma(1), delta(1), epsilon(1). CF(0) has three main subunits: a(1), b(2) and c(9-12). The alpha and beta chains form an alternating ring which encloses part of the gamma chain. CF(1) is attached to CF(0) by a central stalk formed by the gamma and epsilon chains, while a peripheral stalk is formed by the delta and b chains.

The protein localises to the cell inner membrane. It catalyses the reaction ATP + H2O + 4 H(+)(in) = ADP + phosphate + 5 H(+)(out). Functionally, produces ATP from ADP in the presence of a proton gradient across the membrane. The catalytic sites are hosted primarily by the beta subunits. In Cupriavidus metallidurans (strain ATCC 43123 / DSM 2839 / NBRC 102507 / CH34) (Ralstonia metallidurans), this protein is ATP synthase subunit beta.